A 291-amino-acid polypeptide reads, in one-letter code: Bifunctional protein FolD (291 aa).

NADP(+) is bound by residues 166–168, Ile191, and Ile232; that span reads GAG.

This sequence belongs to the tetrahydrofolate dehydrogenase/cyclohydrolase family. As to quaternary structure, homodimer.

It catalyses the reaction (6R)-5,10-methylene-5,6,7,8-tetrahydrofolate + NADP(+) = (6R)-5,10-methenyltetrahydrofolate + NADPH. It carries out the reaction (6R)-5,10-methenyltetrahydrofolate + H2O = (6R)-10-formyltetrahydrofolate + H(+). It participates in one-carbon metabolism; tetrahydrofolate interconversion. Catalyzes the oxidation of 5,10-methylenetetrahydrofolate to 5,10-methenyltetrahydrofolate and then the hydrolysis of 5,10-methenyltetrahydrofolate to 10-formyltetrahydrofolate. The protein is Bifunctional protein FolD of Aquifex aeolicus (strain VF5).